A 159-amino-acid chain; its full sequence is Ribosomal RNA large subunit methyltransferase H (159 aa).

S-adenosyl-L-methionine is bound by residues Leu-76, Gly-108, and 127-132 (FGKMTL).

It belongs to the RNA methyltransferase RlmH family. Homodimer.

It is found in the cytoplasm. The catalysed reaction is pseudouridine(1915) in 23S rRNA + S-adenosyl-L-methionine = N(3)-methylpseudouridine(1915) in 23S rRNA + S-adenosyl-L-homocysteine + H(+). In terms of biological role, specifically methylates the pseudouridine at position 1915 (m3Psi1915) in 23S rRNA. This chain is Ribosomal RNA large subunit methyltransferase H, found in Lysinibacillus sphaericus (strain C3-41).